A 203-amino-acid chain; its full sequence is Small ribosomal subunit protein uS4 (203 aa).

The region spanning Arg93–Val156 is the S4 RNA-binding domain.

This sequence belongs to the universal ribosomal protein uS4 family. Part of the 30S ribosomal subunit. Contacts protein S5. The interaction surface between S4 and S5 is involved in control of translational fidelity.

Its function is as follows. One of the primary rRNA binding proteins, it binds directly to 16S rRNA where it nucleates assembly of the body of the 30S subunit. In terms of biological role, with S5 and S12 plays an important role in translational accuracy. The sequence is that of Small ribosomal subunit protein uS4 from Streptococcus thermophilus (strain CNRZ 1066).